A 467-amino-acid chain; its full sequence is Mothers against decapentaplegic homolog 2 (467 aa).

At serine 2 the chain carries N-acetylserine. Threonine 8 bears the Phosphothreonine mark. Residues 10-176 enclose the MH1 domain; that stretch reads PVVKRLLGWK…YQRVETPVLP (167 aa). Lysine 19 carries the N6-acetyllysine modification. Zn(2+) contacts are provided by cysteine 74, cysteine 149, cysteine 161, and histidine 166. Polar residues predominate over residues 207-217; sequence PAGIEPQSNYI. The tract at residues 207 to 251 is disordered; the sequence is PAGIEPQSNYIPETPPPGYISEDGETSDQQLNQSMDTGSPAELSP. Threonine 220 bears the Phosphothreonine mark. Positions 221-225 match the PY-motif motif; the sequence is PPPGY. Over residues 233–243 the composition is skewed to polar residues; that stretch reads SDQQLNQSMDT. Position 240 is a phosphoserine; by CAMK2 (serine 240). 6 positions are modified to phosphoserine: serine 245, serine 250, serine 255, serine 458, serine 460, and serine 464. Residues 274 to 467 enclose the MH2 domain; that stretch reads WCSIAYYELN…SPSVRCSSMS (194 aa). Phosphoserine; by TGFBR1 is present on residues serine 465 and serine 467.

Belongs to the dwarfin/SMAD family. In terms of assembly, monomer; in the absence of TGF-beta. Heterodimer; in the presence of TGF-beta. Forms a heterodimer with co-SMAD, SMAD4, in the nucleus to form the transactivation complex SMAD2/SMAD4. Found in a complex with SMAD3 and TRIM33 upon addition of TGF-beta. Identified in a complex that contains at least ZNF451, SMAD2, SMAD3 and SMAD4. Interacts (via the MH2 domain) with ZFYVE9; may form trimers with the SMAD4 co-SMAD. Interacts with TAZ/WWRT1. Interacts with FOXH1. Interacts with SNW1. Interacts with CREB-binding protein (CBP) and EP300. Interacts with SNON. Interacts with ALK4/ACVR1B. Interacts with SKOR1. Interacts with SKOR2. Interacts with PRDM16. Interacts (via MH2 domain) with LEMD3. Interacts with RBPMS. Interacts with WWP1. Interacts (dephosphorylated form, via the MH1 and MH2 domains) with RANBP3 (via its C-terminal R domain); the interaction results in the export of dephosphorylated SMAD3 out of the nucleus and termination of the TGF-beta signaling. Interacts with PDPK1 (via PH domain). Interacts with DAB2; the interactions are enhanced upon TGF-beta stimulation. Interacts with USP15. Interacts with PPP5C. Interacts with LDLRAD4 (via the SMAD interaction motif). Interacts (via MH2 domain) with PMEPA1 (via the SMAD interaction motif). Interacts with ZFHX3. Interacts with ZNF451. Interacts with SMURF2 when phosphorylated on Ser-465/467. Interacts with PPM1A. Interacts with TGF-beta. Interacts with TGFBR1. Interacts with TGIF. Interacts with SMAD3 and TRIM33. Interacts with ZNF580. Interacts with NEDD4L in response to TGF-beta. Interacts with HGS. Interacts with AIP1. Interacts with WWP1. Interacts with PML. Interacts weakly with ZNF8. Interacts (when phosphorylated) with RNF111; RNF111 acts as an enhancer of the transcriptional responses by mediating ubiquitination and degradation of SMAD2 inhibitors. Interacts with YAP1 (when phosphorylated at 'Ser-112'). Interacts when phosphorylated with IPO7; the interaction facilitates translocation of SMAD2 to the nucleus. Interacts with MTMR4; negatively regulates TGF-beta signaling through SMAD2 dephosphorylation and retention in endosomes. In terms of processing, in response to TGF-beta, phosphorylated on the C-terminal SXS motif by TGF-beta and activin type 1 receptor kinases, phosphorylation declines progressively in a KMT5A-dependent manner. Phosphorylation in this motif is required for interaction with a number of proteins including SMURF2, SNON and SMAD4 in response to TGF-beta. Dephosphorylated in this motif by PPM1A leading to disruption of the SMAD2/3-SMAD4 complex, nuclear export and termination of the TGF-beta signaling. In response to decorin, the naturally occurring inhibitor of TGF-beta signaling, phosphorylated on Ser-240 by CaMK2. Phosphorylated by MAPK3 upon EGF stimulation; which increases transcriptional activity and stability, and is blocked by calmodulin. Phosphorylated by PDPK1. Post-translationally, in response to TGF-beta, ubiquitinated by NEDD4L; which promotes its degradation. Monoubiquitinated, leading to prevent DNA-binding. Deubiquitination by USP15 alleviates inhibition and promotes activation of TGF-beta target genes. Ubiquitinated by RNF111, leading to its degradation: only SMAD2 proteins that are 'in use' are targeted by RNF111, RNF111 playing a key role in activating SMAD2 and regulating its turnover. Acetylated on Lys-19 by coactivators in response to TGF-beta signaling, which increases transcriptional activity.

Its subcellular location is the cytoplasm. It is found in the nucleus. Receptor-regulated SMAD (R-SMAD) that is an intracellular signal transducer and transcriptional modulator activated by TGF-beta (transforming growth factor) and activin type 1 receptor kinases. Binds the TRE element in the promoter region of many genes that are regulated by TGF-beta and, on formation of the SMAD2/SMAD4 complex, activates transcription. Promotes TGFB1-mediated transcription of odontoblastic differentiation genes in dental papilla cells. Positively regulates PDPK1 kinase activity by stimulating its dissociation from the 14-3-3 protein YWHAQ which acts as a negative regulator. This is Mothers against decapentaplegic homolog 2 (Smad2) from Mus musculus (Mouse).